Reading from the N-terminus, the 336-residue chain is Gibberellin 2-beta-dioxygenase 7 (336 aa).

The region spanning 191–291 (LENSFLRLNK…RMSIAFFVCP (101 aa)) is the Fe2OG dioxygenase domain. Positions 216, 218, and 272 each coordinate Fe cation. Residue R282 is part of the active site. Residue R282 coordinates 2-oxoglutarate.

The protein belongs to the iron/ascorbate-dependent oxidoreductase family. GA2OX subfamily. Fe(2+) is required as a cofactor.

It catalyses the reaction gibberellin A1 + 2-oxoglutarate + O2 = gibberellin A8 + succinate + CO2. It functions in the pathway plant hormone biosynthesis; gibberellin biosynthesis. In terms of biological role, catalyzes the 2-beta-hydroxylation of gibberellins (GA) precursors, rendering them unable to be converted to active GAs. Hydroxylates the C20-GA GA12 and GA53, but is not active on C19-GAs, like GA1, GA4, GA9 and GA20. The chain is Gibberellin 2-beta-dioxygenase 7 (GA2OX7) from Arabidopsis thaliana (Mouse-ear cress).